The sequence spans 430 residues: MKKYDRGWASLETGAALLIVMLLIAWGAGIWQDYIQTKGWQTEARLVSNWTSAARSYIGKNYTTLQGSSTTTTPAVITTTMLKNTGFLSSGFTETNSEGQRLQAYVVRNAQNPELLQAMVVSSGGTPYPVKALIQMAKDITTGLGGYIQDGKTATGALRSWSVALSNYGAKSGNGHIAVLLSTDELSGAAEDTDRLYRFQVNGRPDLNKMHTAIDMGSNNLNNVGAVNAQTGNFSGNVNGVNGTFSGQVKGNSGNFDVNVTAGGDIRSNNGWLITRNSKGWLNETHGGGFYMSDGSWVRSVNNKGIYTGGQVKGGTVRADGRLYTGEYLQLERTAVAGASCSPNGLVGRDNTGAILSCQSGTWGTIGGKLKVTQLSTTGYLGQFDFCAIARMGNAEDAHYCQVVESPAGSRKWYKYEHKTGCIASCVTLN.

Residues 1 to 361 (MKKYDRGWAS…TGAILSCQSG (361 aa)) are constant region. Residues 362-430 (TWGTIGGKLK…GCIASCVTLN (69 aa)) form a variable region region.

In Escherichia coli, this protein is Shufflon protein A'.